Reading from the N-terminus, the 413-residue chain is Peptidase T (413 aa).

Histidine 81 is a binding site for Zn(2+). Residue aspartate 83 is part of the active site. Position 143 (aspartate 143) interacts with Zn(2+). The active-site Proton acceptor is glutamate 178. Residues glutamate 179, aspartate 201, and histidine 383 each coordinate Zn(2+).

Belongs to the peptidase M20B family. The cofactor is Zn(2+).

The protein resides in the cytoplasm. The catalysed reaction is Release of the N-terminal residue from a tripeptide.. Cleaves the N-terminal amino acid of tripeptides. The chain is Peptidase T from Lactococcus lactis subsp. cremoris (Streptococcus cremoris).